A 269-amino-acid polypeptide reads, in one-letter code: MVRIAVAGAAGRMGRNLVKAAHHNPAAKVAAGSERPESSLVGVDLGELCGECKFDVVVCDDLAKQIDQFDVIIDFTAPASTLNNLALCQQYGKSIVIGTTGFTEEQREQIDLVAQQVPVVMAPNYSVGVNLVFKLLEKAAKVMGDYCDIEIVEAHHRHKVDAPSGTAIGMGEAIAGAMGNKLSDVAVYAREGITGERTKDEIGFATIRAGDIVGEHTAMFADIGERVEITHKATDRMTFANGAVKAAVWLHEKPAGFYTMTDVLGLNDL.

Residues 8–13 and Glu-34 each bind NAD(+); that span reads GAAGRM. Residue Arg-35 participates in NADP(+) binding. NAD(+)-binding positions include 98 to 100 and 122 to 125; these read GTT and APNY. His-155 functions as the Proton donor/acceptor in the catalytic mechanism. Residue His-156 coordinates (S)-2,3,4,5-tetrahydrodipicolinate. The active-site Proton donor is Lys-159. (S)-2,3,4,5-tetrahydrodipicolinate is bound at residue 165–166; that stretch reads GT.

This sequence belongs to the DapB family.

The protein resides in the cytoplasm. The enzyme catalyses (S)-2,3,4,5-tetrahydrodipicolinate + NAD(+) + H2O = (2S,4S)-4-hydroxy-2,3,4,5-tetrahydrodipicolinate + NADH + H(+). It carries out the reaction (S)-2,3,4,5-tetrahydrodipicolinate + NADP(+) + H2O = (2S,4S)-4-hydroxy-2,3,4,5-tetrahydrodipicolinate + NADPH + H(+). It functions in the pathway amino-acid biosynthesis; L-lysine biosynthesis via DAP pathway; (S)-tetrahydrodipicolinate from L-aspartate: step 4/4. Its function is as follows. Catalyzes the conversion of 4-hydroxy-tetrahydrodipicolinate (HTPA) to tetrahydrodipicolinate. The polypeptide is 4-hydroxy-tetrahydrodipicolinate reductase (Vibrio vulnificus (strain YJ016)).